A 177-amino-acid polypeptide reads, in one-letter code: Large ribosomal subunit protein uL6 (177 aa).

The protein belongs to the universal ribosomal protein uL6 family. Part of the 50S ribosomal subunit.

This protein binds to the 23S rRNA, and is important in its secondary structure. It is located near the subunit interface in the base of the L7/L12 stalk, and near the tRNA binding site of the peptidyltransferase center. This Thioalkalivibrio sulfidiphilus (strain HL-EbGR7) protein is Large ribosomal subunit protein uL6.